Consider the following 103-residue polypeptide: Small ribosomal subunit protein uS10 (103 aa).

This sequence belongs to the universal ribosomal protein uS10 family. As to quaternary structure, part of the 30S ribosomal subunit.

In terms of biological role, involved in the binding of tRNA to the ribosomes. The polypeptide is Small ribosomal subunit protein uS10 (Leptothrix cholodnii (strain ATCC 51168 / LMG 8142 / SP-6) (Leptothrix discophora (strain SP-6))).